The sequence spans 560 residues: Nuclear receptor subfamily 5 group A member 2 (560 aa).

A disordered region spans residues 21-55 (IASAPGSETRHSPKREEQLREKRAGLPDRHRRPIP). Positions 28-48 (ETRHSPKREEQLREKRAGLPD) are enriched in basic and acidic residues. A DNA-binding region (nuclear receptor) is located at residues 104 to 175 (EELCPVCGDK…KCIDVGMKLE (72 aa)). The Zn(2+) site is built by Cys107, Cys110, Cys124, Cys127, Cys143, Cys149, Cys159, and Cys162. 2 NR C4-type zinc fingers span residues 107–127 (CPVC…CESC) and 143–167 (CIEN…FKKC). Residues 173 to 188 (KLEAVRADRMRGGRNK) are C-terminal extension (CTE). The FTZ-F1 box motif lies at 189 to 208 (FGPMYKRDRALKQQKKALIR). A Glycyl lysine isopeptide (Lys-Gly) (interchain with G-Cter in SUMO1) cross-link involves residue Lys289. One can recognise an NR LBD domain in the interval 319–558 (SIPHLILELL…NLLIEMLHAK (240 aa)). Tyr535 and Lys539 together coordinate a phospholipid derivative. Residues 547 to 558 (YNNLLIEMLHAK) form an AF-2 region.

Belongs to the nuclear hormone receptor family. NR5 subfamily. In terms of assembly, monomer; Binds DNA as a monomer. Interacts with nuclear receptor corepressors NR0B1 and NR0B2; repressing NR5A2 nuclear receptor activity. Interacts with nuclear receptor coactivators CTNNB1, PPARGC1A and NCOA2; interaction takes place following ligand-binding and promotes target gene activation. Interacts (when sumoylated) with GPS2; interaction with GPS2 onto hepatic acute phase protein promoters prevents N-Cor corepressor complex dissociation. Interacts with HNF1A. Interacts with GRIP1. Sumoylated by SUMO1 at Lys-289 during the hepatic acute phase response, leading to promote interaction with GPS2 and prevent N-Cor corepressor complex dissociation.

The protein resides in the nucleus. It is found in the chromosome. Functionally, orphan nuclear receptor that binds DNA as a monomer to the 5'-TCAAGGCCA-3' sequence and controls expression of target genes: regulates key biological processes, such as early embryonic development, cholesterol and bile acid synthesis pathways, as well as liver and pancreas morphogenesis. Ligand-binding causes conformational change which causes recruitment of coactivators, promoting target gene activation. The specific ligand is unknown, but specific phospholipids, such as phosphatidylethanolamine, phosphatidylserine, dilauroyl phosphatidylcholine and diundecanoyl phosphatidylcholine can act as ligand in vitro. Acts as a pioneer transcription factor, which unwraps target DNA from histones and elicits local opening of closed chromatin. Plays a central role during preimplantation stages of embryonic development. Plays a minor role in zygotic genome activation (ZGA) by regulating a small set of two-cell stage genes. Plays a major role in morula development (2-16 cells embryos) by acting as a master regulator at the 8-cell stage, controlling expression of lineage-specifying transcription factors and genes involved in mitosis, telomere maintenance and DNA repair. Zygotic NR5A2 binds to both closed and open chromatin with other transcription factors, often at SINE B1/Alu repeats DNA elements, promoting chromatin accessibility at nearby regulatory regions. Also involved in the epiblast stage of development and embryonic stem cell pluripotency, by promoting expression of POU5F1/OCT4. Regulates other processes later in development, such as formation of connective tissue in lower jaw and middle ear, neural stem cell differentiation, ovarian follicle development and Sertoli cell differentiation. Involved in exocrine pancreas development and acinar cell differentiation. Acts as an essential transcriptional regulator of lipid metabolism. Key regulator of cholesterol 7-alpha-hydroxylase gene (CYP7A) expression in liver. Activates the transcription of CYP2C38. Also acts as a negative regulator of inflammation in different organs, such as intestine, liver and pancreas. Protects against intestinal inflammation via its ability to regulate glucocorticoid production. Plays an anti-inflammatory role during the hepatic acute phase response by acting as a corepressor: inhibits the hepatic acute phase response by preventing dissociation of the N-Cor corepressor complex. Acts as a regulator of immunity by promoting lymphocyte T-cell development, proliferation and effector functions. Also involved in resolution of endoplasmic reticulum stress in the liver. This chain is Nuclear receptor subfamily 5 group A member 2, found in Mus musculus (Mouse).